Reading from the N-terminus, the 705-residue chain is Kinesin-like protein KIF2A (705 aa).

Residues Asp65–Gln185 form a disordered region. Ser75 is modified (phosphoserine). A Phosphothreonine modification is found at Thr96. Ser99 carries the phosphoserine modification. Residue Lys101 is modified to N6-acetyllysine. The span at Leu122–Ser139 shows a compositional bias: polar residues. Phosphoserine is present on residues Ser134 and Ser139. Residues Arg153 to Asp186 are a coiled coil. The span at Cys158 to Gln185 shows a compositional bias: basic and acidic residues. One can recognise a Kinesin motor domain in the interval Arg222–Leu552. Residue Gly312–Thr319 participates in ATP binding. Phosphoserine is present on Gln572. Residues Ala659–Asn698 adopt a coiled-coil conformation.

The protein belongs to the TRAFAC class myosin-kinesin ATPase superfamily. Kinesin family. MCAK/KIF2 subfamily. Interacts with AURKA and PLK1. Interacts with PSRC1. Interacts with MCRS1; the interaction enhances recruitment of KIF2A to the minus ends of spindle microtubules which promotes chromosome alignment.

Its subcellular location is the cytoplasm. It is found in the cytoskeleton. The protein resides in the microtubule organizing center. The protein localises to the centrosome. It localises to the spindle pole. Its subcellular location is the spindle. Plus end-directed microtubule-dependent motor required for normal brain development. May regulate microtubule dynamics during axonal growth. Required for normal progression through mitosis. Required for normal congress of chromosomes at the metaphase plate. Required for normal spindle dynamics during mitosis. Promotes spindle turnover. Implicated in formation of bipolar mitotic spindles. Has microtubule depolymerization activity. The polypeptide is Kinesin-like protein KIF2A (Rattus norvegicus (Rat)).